A 169-amino-acid chain; its full sequence is Large ribosomal subunit protein uL10 (169 aa).

The protein belongs to the universal ribosomal protein uL10 family. In terms of assembly, part of the ribosomal stalk of the 50S ribosomal subunit. The N-terminus interacts with L11 and the large rRNA to form the base of the stalk. The C-terminus forms an elongated spine to which L12 dimers bind in a sequential fashion forming a multimeric L10(L12)X complex.

In terms of biological role, forms part of the ribosomal stalk, playing a central role in the interaction of the ribosome with GTP-bound translation factors. The protein is Large ribosomal subunit protein uL10 of Rickettsia africae (strain ESF-5).